The chain runs to 46 residues: Major cold-shock protein (46 aa).

Positions 1 to 46 (EKGFGFISPADGSKDVFVHFSAIQSTSFKTLDEGQRVEFTIEQGQK) constitute a CSD domain.

As to quaternary structure, homodimer.

The protein localises to the cytoplasm. The chain is Major cold-shock protein (cspA) from Aeromonas salmonicida.